The sequence spans 316 residues: Pleckstrin homology domain-containing family F member 1 homolog (316 aa).

The region spanning valine 35–glutamate 131 is the PH domain. An FYVE-type zinc finger spans residues aspartate 152 to lysine 212. Zn(2+) is bound by residues cysteine 158, cysteine 161, cysteine 175, cysteine 178, cysteine 183, cysteine 186, cysteine 204, and cysteine 207. The segment at proline 215–cysteine 316 is disordered. Acidic residues predominate over residues serine 244 to threonine 253. Residues serine 279–serine 292 show a composition bias toward low complexity. A compositionally biased stretch (polar residues) spans valine 298–cysteine 316.

In terms of assembly, interacts with Gdi (Rab GDP dissociation inhibitor). As to expression, in ovaries, expressed both in the germ line cells and in the overlying somatic follicular epithelium.

It localises to the apical cell membrane. It is found in the endosome membrane. The protein resides in the cytoplasm. Its subcellular location is the cell cortex. Functions in the regulation of endosome morphology and late endosome formation. Has a role in controlling trafficking from early to late endosomes and from late endosomes to lysosomes. Important for localization of Gdi to the endosomal membranes. May function in controlling the activity of multiple regulators in the endocytic pathway, perhaps by positively controlling those involved in the early steps of endocytosis such as Rab5 and hrs, and negative regulating those involved in the late stages of endocytosis like car and VhaSFD. This chain is Pleckstrin homology domain-containing family F member 1 homolog, found in Drosophila melanogaster (Fruit fly).